The following is a 266-amino-acid chain: Cell wall synthesis protein Wag31 (266 aa).

Residues 31 to 64 (FLDLVENELTQLIEENSDLRQRIEELDHELAAGG) are a coiled coil. At Thr-77 the chain carries Phosphothreonine. Residues 152 to 203 (TAEATVAEAQQRADAMLADAQTRSEVQSRQAQEKADALQAEAERKHSEIMGA) adopt a coiled-coil conformation. The tract at residues 239–266 (ELGQRGSAAPVDSNADAGGFDQFNRGNN) is disordered.

This sequence belongs to the DivIVA family. Forms homooligomers. Post-translationally, phosphorylated by PknA.

It is found in the cytoplasm. Its function is as follows. Important for maintaining cell shape and cell wall integrity by localizing peptidoglycan synthesis to the cell poles. In Mycobacterium leprae (strain TN), this protein is Cell wall synthesis protein Wag31 (wag31).